We begin with the raw amino-acid sequence, 510 residues long: GMP synthase [glutamine-hydrolyzing] (510 aa).

The Glutamine amidotransferase type-1 domain maps to 5-195 (LVIVVDFGGQ…LYEICKADGD (191 aa)). Cysteine 82 serves as the catalytic Nucleophile. Catalysis depends on residues histidine 169 and glutamate 171. The region spanning 196 to 385 (WTMENFLEEQ…LEMPEYLVYR (190 aa)) is the GMPS ATP-PPase domain. 223–229 (SGGVDSS) contributes to the ATP binding site.

Homodimer.

The catalysed reaction is XMP + L-glutamine + ATP + H2O = GMP + L-glutamate + AMP + diphosphate + 2 H(+). It functions in the pathway purine metabolism; GMP biosynthesis; GMP from XMP (L-Gln route): step 1/1. Its function is as follows. Catalyzes the synthesis of GMP from XMP. In Finegoldia magna (strain ATCC 29328 / DSM 20472 / WAL 2508) (Peptostreptococcus magnus), this protein is GMP synthase [glutamine-hydrolyzing].